Consider the following 187-residue polypeptide: UPF0215 protein PAE0952 (187 aa).

This sequence belongs to the UPF0215 family.

The polypeptide is UPF0215 protein PAE0952 (Pyrobaculum aerophilum (strain ATCC 51768 / DSM 7523 / JCM 9630 / CIP 104966 / NBRC 100827 / IM2)).